We begin with the raw amino-acid sequence, 62 residues long: Metallothionein-4 (62 aa).

The a divalent metal cation site is built by cysteine 6, cysteine 8, cysteine 14, cysteine 16, cysteine 20, cysteine 22, cysteine 25, cysteine 27, cysteine 30, cysteine 34, cysteine 35, cysteine 37, cysteine 38, cysteine 42, cysteine 45, cysteine 49, cysteine 51, cysteine 58, cysteine 60, and cysteine 61.

The protein belongs to the metallothionein superfamily. Type 1 family. In terms of tissue distribution, expressed exclusively in stratified squamous epithelia associated with oral epithelia, esophagus, upper stomach, tail, footpads and neonatal skin.

Its function is as follows. Seems to bind zinc and copper. Could play a special role in regulating zinc metabolism during the differentiation of stratified epithelia. This is Metallothionein-4 (Mt4) from Mus musculus (Mouse).